A 207-amino-acid chain; its full sequence is Chloramphenicol acetyltransferase (207 aa).

Histidine 186 functions as the Proton acceptor in the catalytic mechanism.

The protein belongs to the chloramphenicol acetyltransferase family. As to quaternary structure, homotrimer.

The enzyme catalyses chloramphenicol + acetyl-CoA = chloramphenicol 3-acetate + CoA. Its function is as follows. This enzyme is an effector of chloramphenicol resistance in bacteria. This Campylobacter coli protein is Chloramphenicol acetyltransferase.